The primary structure comprises 305 residues: MSVEIDWDNIRGDLSVNQGVKDFLNSRLQEFELPSYVNNLKVTNFDLGTMPPNVILKQMDDPLDEFYSYLLQEGDISKEAAKDKNTDVQLLVELDYKGDMSIELSADLVLNYPSPQFMILPVKLRISDIGMHCLCLLAYLKKQLFISFLCDVSDPLLENDKLQVDPSGPNFMGKRALERISLIRNIKIHTELGQLDQGEGSVLRSVGKLEEFLVDLFRNLIRKEAAWPSWIDLDFTPEDPEDPEEEGRENDLVADSSNDGKDIEMKSGTEETLGAGIQESVQHVSPAVTSIDQESRVNSNTSLEE.

The region spanning 1 to 236 (MSVEIDWDNI…WPSWIDLDFT (236 aa)) is the SMP-LTD domain. Positions 233-305 (LDFTPEDPED…RVNSNTSLEE (73 aa)) are disordered. Acidic residues predominate over residues 235-248 (FTPEDPEDPEEEGR). A compositionally biased stretch (basic and acidic residues) spans 258-269 (NDGKDIEMKSGT). Polar residues predominate over residues 279–305 (ESVQHVSPAVTSIDQESRVNSNTSLEE).

The protein belongs to the MDM12 family. Component of the ER-mitochondria encounter structure (ERMES) or MDM complex, composed of MMM1, MDM10, MDM12 and MDM34. An MMM1 homodimer associates with one molecule of MDM12 on each side in a pairwise head-to-tail manner, and the SMP-LTD domains of MMM1 and MDM12 generate a continuous hydrophobic tunnel for phospholipid trafficking.

The protein localises to the mitochondrion outer membrane. It is found in the endoplasmic reticulum membrane. Functionally, component of the ERMES/MDM complex, which serves as a molecular tether to connect the endoplasmic reticulum (ER) and mitochondria. Components of this complex are involved in the control of mitochondrial shape and protein biogenesis, and function in nonvesicular lipid trafficking between the ER and mitochondria. MDM12 is required for the interaction of the ER-resident membrane protein MMM1 and the outer mitochondrial membrane-resident beta-barrel protein MDM10. The MDM12-MMM1 subcomplex functions in the major beta-barrel assembly pathway that is responsible for biogenesis of all mitochondrial outer membrane beta-barrel proteins, and acts in a late step after the SAM complex. The MDM10-MDM12-MMM1 subcomplex further acts in the TOM40-specific pathway after the action of the MDM12-MMM1 complex. Essential for establishing and maintaining the structure of mitochondria and maintenance of mtDNA nucleoids. The polypeptide is Mitochondrial distribution and morphology protein 12 (Kluyveromyces lactis (strain ATCC 8585 / CBS 2359 / DSM 70799 / NBRC 1267 / NRRL Y-1140 / WM37) (Yeast)).